A 492-amino-acid chain; its full sequence is N-succinylglutamate 5-semialdehyde dehydrogenase (492 aa).

220–225 (GSSTTG) is an NAD(+) binding site. Residues Glu243 and Cys277 contribute to the active site.

This sequence belongs to the aldehyde dehydrogenase family. AstD subfamily.

It carries out the reaction N-succinyl-L-glutamate 5-semialdehyde + NAD(+) + H2O = N-succinyl-L-glutamate + NADH + 2 H(+). It functions in the pathway amino-acid degradation; L-arginine degradation via AST pathway; L-glutamate and succinate from L-arginine: step 4/5. Functionally, catalyzes the NAD-dependent reduction of succinylglutamate semialdehyde into succinylglutamate. This is N-succinylglutamate 5-semialdehyde dehydrogenase from Klebsiella pneumoniae subsp. pneumoniae (strain ATCC 700721 / MGH 78578).